A 439-amino-acid chain; its full sequence is MAESPAFLSAQDVGSFAYLTIKDRTPQILTKVIDTLHRHKSEFFEKHGEEGVEAEKKAISLLSKLRNELQTDKPIIPLVDKCVDTDIWNQYLEYQRSLLNEGDGEPRWFFSPWLFVECYMYRRIHEAIMQSPPIHDFDVFKESKDENFFESQDSINALCTHLLQLKPITDLGEKQIQDEFFKLLQISLWGNKCDLSLSGGESSSQKADIINSLKDLKPFILVNETESLWALLSKLKKTAEPPAVRVDIVLDNSGFELVTDLVFADFLLSSELATEIHFHGKIIPWFVSDVTVRDFEWIVEHMKGSHLESMSACGAAWEAYVGMKKWVYHDHAFWTLPHPFCAMPQVAPDLYAELQKAGVVLFKGDLNYRKLMGDRKWKFTVPFHQALSGFHPAPLCSIRTLKCELQVGLQPGQAEHLTASDPHWLTTGKYGIFQFDGPL.

Ala2 bears the N-acetylalanine mark. Phosphoserine is present on Ser4. Lys40 carries the N6-acetyllysine modification. 2 residues coordinate Mn(2+): Asp251 and Asn252. A substrate-binding site is contributed by 251 to 252 (DN). Positions 256 and 289 each coordinate S-adenosyl-L-methionine. Asp289 serves as a coordination point for Mn(2+). Substrate-binding positions include 365–369 (DLNYR) and Lys402. The Subfamily III RTxK motif motif lies at 399-402 (RTLK).

It belongs to the damage-control phosphatase family. Sugar phosphate phosphatase III subfamily. The cofactor is Mn(2+). Ni(2+) serves as cofactor. In terms of processing, automethylated.

It catalyses the reaction beta-D-fructose 1-phosphate + H2O = D-fructose + phosphate. It carries out the reaction beta-D-fructose 6-phosphate = dihydroxyacetone + D-glyceraldehyde 3-phosphate. The catalysed reaction is L-glutamyl-[protein] + S-adenosyl-L-methionine = [protein]-L-glutamate 5-O-methyl ester + S-adenosyl-L-homocysteine. In terms of biological role, metal-dependent phosphatase that shows phosphatase activity against several substrates, including fructose-1-phosphate and fructose-6-phosphate. Its preference for fructose-1-phosphate, a strong glycating agent that causes DNA damage rather than a canonical yeast metabolite, suggests a damage-control function in hexose phosphate metabolism. Has also been shown to have O-methyltransferase activity that methylates glutamate residues of target proteins to form gamma-glutamyl methyl ester residues. Possibly methylates PCNA, suggesting it is involved in the DNA damage response. The sequence is that of Damage-control phosphatase ARMT1 from Rattus norvegicus (Rat).